The following is a 156-amino-acid chain: ATP synthase subunit b (156 aa).

The helical transmembrane segment at 12-32 threads the bilayer; it reads VAFLIFVLFCMKFVWPPVIAA.

The protein belongs to the ATPase B chain family. In terms of assembly, F-type ATPases have 2 components, F(1) - the catalytic core - and F(0) - the membrane proton channel. F(1) has five subunits: alpha(3), beta(3), gamma(1), delta(1), epsilon(1). F(0) has three main subunits: a(1), b(2) and c(10-14). The alpha and beta chains form an alternating ring which encloses part of the gamma chain. F(1) is attached to F(0) by a central stalk formed by the gamma and epsilon chains, while a peripheral stalk is formed by the delta and b chains.

Its subcellular location is the cell inner membrane. F(1)F(0) ATP synthase produces ATP from ADP in the presence of a proton or sodium gradient. F-type ATPases consist of two structural domains, F(1) containing the extramembraneous catalytic core and F(0) containing the membrane proton channel, linked together by a central stalk and a peripheral stalk. During catalysis, ATP synthesis in the catalytic domain of F(1) is coupled via a rotary mechanism of the central stalk subunits to proton translocation. Functionally, component of the F(0) channel, it forms part of the peripheral stalk, linking F(1) to F(0). In Pseudomonas fluorescens (strain Pf0-1), this protein is ATP synthase subunit b.